The sequence spans 805 residues: Cation channel sperm-associated auxiliary subunit delta (805 aa).

The N-terminal stretch at 1–16 is a signal peptide; it reads MLVLMLAAAVATMVRA. Over 17–723 the chain is Extracellular; that stretch reads HTLCRVHTVR…ALPVTKFQPL (707 aa). 7 disulfides stabilise this stretch: C20-C366, C56-C143, C142-C149, C384-C493, C507-C701, C522-C569, and C621-C651. Residues N227, N419, N469, N535, and N627 are each glycosylated (N-linked (GlcNAc...) asparagine). The helical transmembrane segment at 724–745 threads the bilayer; that stretch reads LTILLMVTTTLLTAWLAYAIPK. Residues 746–805 lie on the Cytoplasmic side of the membrane; the sequence is QLRSEKGQRLLGFCYQILQLCLGVCFCTWLRGKLRQWLRPRRVKDQNRGKVRVAQKHPET.

The protein belongs to the CATSPERD family. Component of the CatSper complex or CatSpermasome composed of the core pore-forming members CATSPER1, CATSPER2, CATSPER3 and CATSPER4 as well as auxiliary members CATSPERB, CATSPERG2, CATSPERD, CATSPERE, CATSPERZ, C2CD6/CATSPERT, SLCO6C1, TMEM249, TMEM262 and EFCAB9. HSPA1 may be an additional auxiliary complex member. The core complex members CATSPER1, CATSPER2, CATSPER3 and CATSPER4 form a heterotetrameric channel. The auxiliary CATSPERB, CATSPERG2, CATSPERD and CATSPERE subunits form a pavilion-like structure over the pore which stabilizes the complex through interactions with CATSPER4, CATSPER3, CATSPER1 and CATSPER2 respectively. SLCO6C1 interacts with CATSPERE and TMEM262/CATSPERH interacts with CATSPERB, further stabilizing the complex. C2CD6/CATSPERT interacts at least with CATSPERD and is required for targeting the CatSper complex in the flagellar membrane. As to expression, testis-specific.

It localises to the cell projection. Its subcellular location is the cilium. It is found in the flagellum membrane. Its function is as follows. Auxiliary component of the CatSper complex, a complex involved in sperm cell hyperactivation. Sperm cell hyperactivation is needed for sperm motility which is essential late in the preparation of sperm for fertilization. Required for CATSPER1 stability before intraflagellar transport and/or incorporation of the CatSper complex channel into the flagellar membrane. This is Cation channel sperm-associated auxiliary subunit delta from Mus musculus (Mouse).